A 145-amino-acid chain; its full sequence is uncharacterized protein (145 aa).

This is an uncharacterized protein from Escherichia coli (strain K12).